The chain runs to 103 residues: Small ribosomal subunit protein uS10 (103 aa).

The protein belongs to the universal ribosomal protein uS10 family. In terms of assembly, part of the 30S ribosomal subunit.

In terms of biological role, involved in the binding of tRNA to the ribosomes. The sequence is that of Small ribosomal subunit protein uS10 from Actinobacillus pleuropneumoniae serotype 5b (strain L20).